The sequence spans 178 residues: MAELTTLARPYAKAAFEHAQAHQQLANWSAMLGLAAAVSQDDTMQRMLKAPRLTSAQKATTFIEVCGEKFDAKAQNFIHVVAENDRLPLLPEIAELFDLYKAEQEKSVDVDVTSAFALNQEQQDKLAKVLSARLGREVRLHAAEDASLIGGVVIRAGDLVIDGSVRGKIAKLAEALKS.

Belongs to the ATPase delta chain family. In terms of assembly, F-type ATPases have 2 components, F(1) - the catalytic core - and F(0) - the membrane proton channel. F(1) has five subunits: alpha(3), beta(3), gamma(1), delta(1), epsilon(1). F(0) has three main subunits: a(1), b(2) and c(10-14). The alpha and beta chains form an alternating ring which encloses part of the gamma chain. F(1) is attached to F(0) by a central stalk formed by the gamma and epsilon chains, while a peripheral stalk is formed by the delta and b chains.

It localises to the cell inner membrane. F(1)F(0) ATP synthase produces ATP from ADP in the presence of a proton or sodium gradient. F-type ATPases consist of two structural domains, F(1) containing the extramembraneous catalytic core and F(0) containing the membrane proton channel, linked together by a central stalk and a peripheral stalk. During catalysis, ATP synthesis in the catalytic domain of F(1) is coupled via a rotary mechanism of the central stalk subunits to proton translocation. In terms of biological role, this protein is part of the stalk that links CF(0) to CF(1). It either transmits conformational changes from CF(0) to CF(1) or is implicated in proton conduction. The protein is ATP synthase subunit delta of Pseudomonas syringae pv. syringae (strain B728a).